Reading from the N-terminus, the 276-residue chain is Urease accessory protein UreD (276 aa).

The protein belongs to the UreD family. UreD, UreF and UreG form a complex that acts as a GTP-hydrolysis-dependent molecular chaperone, activating the urease apoprotein by helping to assemble the nickel containing metallocenter of UreC. The UreE protein probably delivers the nickel.

Its subcellular location is the cytoplasm. Its function is as follows. Required for maturation of urease via the functional incorporation of the urease nickel metallocenter. The chain is Urease accessory protein UreD from Albidiferax ferrireducens (strain ATCC BAA-621 / DSM 15236 / T118) (Rhodoferax ferrireducens).